Reading from the N-terminus, the 896-residue chain is Isoleucine--tRNA ligase (896 aa).

The 'HIGH' region motif lies at 57–67; the sequence is PYANNNIHIGH. L-isoleucyl-5'-AMP is bound at residue Glu543. The 'KMSKS' region motif lies at 584–588; that stretch reads KMSKS. Lys587 serves as a coordination point for ATP. The Zn(2+) site is built by Cys869, Cys872, Cys885, and Cys888.

This sequence belongs to the class-I aminoacyl-tRNA synthetase family. IleS type 1 subfamily. Monomer. The cofactor is Zn(2+).

Its subcellular location is the cytoplasm. The enzyme catalyses tRNA(Ile) + L-isoleucine + ATP = L-isoleucyl-tRNA(Ile) + AMP + diphosphate. In terms of biological role, catalyzes the attachment of isoleucine to tRNA(Ile). As IleRS can inadvertently accommodate and process structurally similar amino acids such as valine, to avoid such errors it has two additional distinct tRNA(Ile)-dependent editing activities. One activity is designated as 'pretransfer' editing and involves the hydrolysis of activated Val-AMP. The other activity is designated 'posttransfer' editing and involves deacylation of mischarged Val-tRNA(Ile). The chain is Isoleucine--tRNA ligase from Acholeplasma laidlawii (strain PG-8A).